The chain runs to 565 residues: Urocanate hydratase (565 aa).

NAD(+)-binding positions include 58-59 (GG), glutamine 136, 182-184 (GMG), glutamate 202, arginine 207, 245-246 (NA), 266-270 (QTSAH), 276-277 (YL), and tyrosine 325. Residue cysteine 413 is part of the active site. Glycine 495 contributes to the NAD(+) binding site.

Belongs to the urocanase family. The cofactor is NAD(+).

It localises to the cytoplasm. It catalyses the reaction 4-imidazolone-5-propanoate = trans-urocanate + H2O. It participates in amino-acid degradation; L-histidine degradation into L-glutamate; N-formimidoyl-L-glutamate from L-histidine: step 2/3. Its function is as follows. Catalyzes the conversion of urocanate to 4-imidazolone-5-propionate. This Vibrio vulnificus (strain CMCP6) protein is Urocanate hydratase.